The sequence spans 367 residues: Pectate lyase 1 (367 aa).

The first 21 residues, M1–S21, serve as a signal peptide directing secretion. Intrachain disulfides connect C28–C45 and C128–C147. N148 carries an N-linked (GlcNAc...) asparagine glycan. D170 provides a ligand contact to Ca(2+). An N-linked (GlcNAc...) asparagine glycan is attached at N178. 2 residues coordinate Ca(2+): D194 and D198. R250 is a catalytic residue. C306 and C312 are oxidised to a cystine.

Belongs to the polysaccharide lyase 1 family. Amb a subfamily. Ca(2+) serves as cofactor.

It catalyses the reaction Eliminative cleavage of (1-&gt;4)-alpha-D-galacturonan to give oligosaccharides with 4-deoxy-alpha-D-galact-4-enuronosyl groups at their non-reducing ends.. It participates in glycan metabolism; pectin degradation; 2-dehydro-3-deoxy-D-gluconate from pectin: step 2/5. Has pectate lyase activity. The polypeptide is Pectate lyase 1 (Juniperus virginiana (Eastern redcedar)).